The sequence spans 257 residues: Cilia- and flagella-associated protein 300 (257 aa).

This sequence belongs to the CFAP300 family.

The protein localises to the cytoplasm. Its subcellular location is the cytoskeleton. It is found in the flagellum axoneme. Functionally, cilium- and flagellum-specific protein that plays a role in axonemal structure organization and motility. Plays a role in outer and inner dynein arm assembly. The chain is Cilia- and flagella-associated protein 300 from Chlamydomonas reinhardtii (Chlamydomonas smithii).